A 492-amino-acid polypeptide reads, in one-letter code: Probable sphingolipid transporter spinster homolog 1 (492 aa).

A helical transmembrane segment spans residues 29-49 (FVTILCIINLINYVDRGVIAS). 2 N-linked (GlcNAc...) asparagine glycosylation sites follow: Asn53 and Asn76. Transmembrane regions (helical) follow at residues 83-103 (GLLS…FAGL), 119-139 (VWTI…IAVF), 141-161 (MFVG…IDDS), 169-189 (FWLG…YVFG), 200-220 (WAFY…FCIK), 279-299 (VFIV…AYSY), and 317-337 (IFGG…SYVL). N-linked (GlcNAc...) asparagine glycosylation is present at Asn341. The next 4 helical transmembrane spans lie at 348–368 (FKLL…AFLM), 372–392 (YAFI…QAPV), 407–427 (LSMA…SSPL), and 442–462 (TLII…GIFM). At Ser472 the chain carries Phosphoserine. Residues 472–481 (SEDDEVEEDK) show a composition bias toward acidic residues. The disordered stretch occupies residues 472-492 (SEDDEVEEDKLESKTENSTLA). Asn488 is a glycosylation site (N-linked (GlcNAc...) asparagine).

It belongs to the major facilitator superfamily. Spinster (TC 2.A.1.49) family.

It localises to the late endosome membrane. The protein resides in the lysosome membrane. Functionally, probable sphingolipid transporter that plays a central role in endosomes and/or lysosomes storage. The sequence is that of Probable sphingolipid transporter spinster homolog 1 from Arabidopsis thaliana (Mouse-ear cress).